A 512-amino-acid polypeptide reads, in one-letter code: Cytochrome P450 1A1 (512 aa).

A mitochondrial targeting signal region spans residues 29–40; sequence SRPRVPKGLKNP. Serine 67 carries an O-linked (GlcNAc) serine glycan. Residue phenylalanine 224 coordinates substrate. Cysteine 457 provides a ligand contact to heme.

It belongs to the cytochrome P450 family. As to quaternary structure, interacts with cytosolic chaperones HSP70 and HSP90; this interaction is required for initial targeting to mitochondria. Interacts (via mitochondrial targeting signal) with TOMM40 (via N-terminus); this interaction is required for translocation across the mitochondrial outer membrane. The cofactor is heme.

Its subcellular location is the endoplasmic reticulum membrane. The protein resides in the mitochondrion inner membrane. The protein localises to the microsome membrane. It localises to the cytoplasm. The enzyme catalyses an organic molecule + reduced [NADPH--hemoprotein reductase] + O2 = an alcohol + oxidized [NADPH--hemoprotein reductase] + H2O + H(+). It carries out the reaction estrone + reduced [NADPH--hemoprotein reductase] + O2 = 2-hydroxyestrone + oxidized [NADPH--hemoprotein reductase] + H2O + H(+). The catalysed reaction is estrone + reduced [NADPH--hemoprotein reductase] + O2 = 4-hydroxyestrone + oxidized [NADPH--hemoprotein reductase] + H2O + H(+). It catalyses the reaction estrone + reduced [NADPH--hemoprotein reductase] + O2 = 6alpha-hydroxyestrone + oxidized [NADPH--hemoprotein reductase] + H2O + H(+). The enzyme catalyses estrone + reduced [NADPH--hemoprotein reductase] + O2 = 15alpha-hydroxyestrone + oxidized [NADPH--hemoprotein reductase] + H2O + H(+). It carries out the reaction estrone + reduced [NADPH--hemoprotein reductase] + O2 = 16alpha-hydroxyestrone + oxidized [NADPH--hemoprotein reductase] + H2O + H(+). The catalysed reaction is 17beta-estradiol + reduced [NADPH--hemoprotein reductase] + O2 = 2-hydroxy-17beta-estradiol + oxidized [NADPH--hemoprotein reductase] + H2O + H(+). It catalyses the reaction 17beta-estradiol + reduced [NADPH--hemoprotein reductase] + O2 = 4-hydroxy-17beta-estradiol + oxidized [NADPH--hemoprotein reductase] + H2O + H(+). The enzyme catalyses 17beta-estradiol + reduced [NADPH--hemoprotein reductase] + O2 = 6alpha-hydroxy-17beta-estradiol + oxidized [NADPH--hemoprotein reductase] + H2O + H(+). It carries out the reaction 17beta-estradiol + reduced [NADPH--hemoprotein reductase] + O2 = 7alpha-hydroxy-17beta-estradiol + oxidized [NADPH--hemoprotein reductase] + H2O + H(+). The catalysed reaction is 17beta-estradiol + reduced [NADPH--hemoprotein reductase] + O2 = 15alpha-hydroxy-17beta-estradiol + oxidized [NADPH--hemoprotein reductase] + H2O + H(+). It catalyses the reaction (5Z,8Z,11Z)-eicosatrienoate + reduced [NADPH--hemoprotein reductase] + O2 = 19-hydroxy-(5Z,8Z,11Z)-eicosatrienoate + oxidized [NADPH--hemoprotein reductase] + H2O + H(+). The enzyme catalyses (5Z,8Z,11Z,14Z)-eicosatetraenoate + reduced [NADPH--hemoprotein reductase] + O2 = 16-hydroxy-(5Z,8Z,11Z,14Z)-eicosatetraenoate + oxidized [NADPH--hemoprotein reductase] + H2O + H(+). It carries out the reaction (5Z,8Z,11Z,14Z)-eicosatetraenoate + reduced [NADPH--hemoprotein reductase] + O2 = 17-hydroxy-(5Z,8Z,11Z,14Z)-eicosatetraenoate + oxidized [NADPH--hemoprotein reductase] + H2O + H(+). The catalysed reaction is (5Z,8Z,11Z,14Z)-eicosatetraenoate + reduced [NADPH--hemoprotein reductase] + O2 = 18-hydroxy-(5Z,8Z,11Z,14Z)-eicosatetraenoate + oxidized [NADPH--hemoprotein reductase] + H2O + H(+). It catalyses the reaction (5Z,8Z,11Z,14Z)-eicosatetraenoate + reduced [NADPH--hemoprotein reductase] + O2 = 19-hydroxy-(5Z,8Z,11Z,14Z)-eicosatetraenoate + oxidized [NADPH--hemoprotein reductase] + H2O + H(+). The enzyme catalyses (5Z,8Z,11Z,14Z,17Z)-eicosapentaenoate + reduced [NADPH--hemoprotein reductase] + O2 = 19-hydroxy-(5Z,8Z,11Z,14Z,17Z)-eicosapentaenoate + oxidized [NADPH--hemoprotein reductase] + H2O + H(+). It carries out the reaction (5Z,8Z,11Z,14Z)-eicosatetraenoate + reduced [NADPH--hemoprotein reductase] + O2 = (8R,9S)-epoxy-(5Z,11Z,14Z)-eicosatrienoate + oxidized [NADPH--hemoprotein reductase] + H2O + H(+). The catalysed reaction is (5Z,8Z,11Z,14Z)-eicosatetraenoate + reduced [NADPH--hemoprotein reductase] + O2 = (11R,12S)-epoxy-(5Z,8Z,14Z)-eicosatrienoate + oxidized [NADPH--hemoprotein reductase] + H2O + H(+). It catalyses the reaction (5Z,8Z,11Z,14Z)-eicosatetraenoate + reduced [NADPH--hemoprotein reductase] + O2 = (14S,15R)-epoxy-(5Z,8Z,11Z)-eicosatrienoate + oxidized [NADPH--hemoprotein reductase] + H2O + H(+). The enzyme catalyses (5Z,8Z,11Z,14Z)-eicosatetraenoate + reduced [NADPH--hemoprotein reductase] + O2 = (14R,15S)-epoxy-(5Z,8Z,11Z)-eicosatrienoate + oxidized [NADPH--hemoprotein reductase] + H2O + H(+). It carries out the reaction (5Z,8Z,11Z,14Z,17Z)-eicosapentaenoate + reduced [NADPH--hemoprotein reductase] + O2 = (17R,18S)-epoxy-(5Z,8Z,11Z,14Z)-eicosatetraenoate + oxidized [NADPH--hemoprotein reductase] + H2O + H(+). The catalysed reaction is (4Z,7Z,10Z,13Z,16Z,19Z)-docosahexaenoate + reduced [NADPH--hemoprotein reductase] + O2 = (19S,20R)-epoxy-(4Z,7Z,10Z,13Z,16Z)-docosapentaenoate + oxidized [NADPH--hemoprotein reductase] + H2O + H(+). It catalyses the reaction (4Z,7Z,10Z,13Z,16Z,19Z)-docosahexaenoate + reduced [NADPH--hemoprotein reductase] + O2 = (19R,20S)-epoxy-(4Z,7Z,10Z,13Z,16Z)-docosapentaenoate + oxidized [NADPH--hemoprotein reductase] + H2O + H(+). The enzyme catalyses all-trans-retinol + reduced [NADPH--hemoprotein reductase] + O2 = all-trans-retinal + oxidized [NADPH--hemoprotein reductase] + 2 H2O + H(+). It carries out the reaction all-trans-retinal + reduced [NADPH--hemoprotein reductase] + O2 = all-trans-retinoate + oxidized [NADPH--hemoprotein reductase] + H2O + 2 H(+). The catalysed reaction is (13S)-hydroperoxy-(9Z,11E)-octadecadienoate = 13-oxo-(9Z,11E)-octadecadienoate + H2O. It catalyses the reaction (12S)-hydroperoxy-(5Z,8Z,10E,14Z)-eicosatetraenoate = 12-oxo-(5Z,8Z,10E,14Z)-eicosatetraenoate + H2O. The enzyme catalyses (15S)-hydroperoxy-(5Z,8Z,11Z,13E)-eicosatetraenoate = 15-oxo-(5Z,8Z,11Z,13E)-eicosatetraenoate + H2O. It carries out the reaction (5S)-hydroperoxy-(6E,8Z,11Z,14Z)-eicosatetraenoate = 5-oxo-(6E,8Z,11Z,14Z)-eicosatetraenoate + H2O. It participates in steroid hormone biosynthesis. The protein operates within lipid metabolism; fatty acid metabolism. It functions in the pathway cofactor metabolism; retinol metabolism. Its function is as follows. A cytochrome P450 monooxygenase involved in the metabolism of various endogenous substrates, including fatty acids, steroid hormones and vitamins. Mechanistically, uses molecular oxygen inserting one oxygen atom into a substrate, and reducing the second into a water molecule, with two electrons provided by NADPH via cytochrome P450 reductase (CPR; NADPH-ferrihemoprotein reductase). Catalyzes the hydroxylation of carbon-hydrogen bonds. Exhibits high catalytic activity for the formation of hydroxyestrogens from estrone (E1) and 17beta-estradiol (E2), namely 2-hydroxy E1 and E2, as well as D-ring hydroxylated E1 and E2 at the C15alpha and C16alpha positions. Displays different regioselectivities for polyunsaturated fatty acids (PUFA) hydroxylation. Catalyzes the epoxidation of double bonds of certain PUFA. Converts arachidonic acid toward epoxyeicosatrienoic acid (EET) regioisomers, 8,9-, 11,12-, and 14,15-EET, that function as lipid mediators in the vascular system. Displays an absolute stereoselectivity in the epoxidation of eicosapentaenoic acid (EPA) producing the 17(R),18(S) enantiomer. May play an important role in all-trans retinoic acid biosynthesis in extrahepatic tissues. Catalyzes two successive oxidative transformation of all-trans retinol to all-trans retinal and then to the active form all-trans retinoic acid. May also participate in eicosanoids metabolism by converting hydroperoxide species into oxo metabolites (lipoxygenase-like reaction, NADPH-independent). The protein is Cytochrome P450 1A1 (CYP1A1) of Macaca mulatta (Rhesus macaque).